A 577-amino-acid chain; its full sequence is Gamma-tubulin complex component gfh1 (577 aa).

Belongs to the TUBGCP family.

The protein localises to the cytoplasm. It is found in the cytoskeleton. It localises to the microtubule organizing center. The protein resides in the spindle pole body. In terms of biological role, required for proper anchoring of astral microtubules at the spindle pole bodies (SPBs), during anaphase, ensuring correct cell polarity. This is Gamma-tubulin complex component gfh1 (gfh1) from Schizosaccharomyces pombe (strain 972 / ATCC 24843) (Fission yeast).